The primary structure comprises 365 residues: Glycine oxidase (365 aa).

Residues 12-13 (VI), 32-33 (DQ), 40-41 (SS), 45-47 (GGI), and I173 each bind FAD. R302 lines the substrate pocket. 327–333 (HYRNGLV) contacts FAD.

It belongs to the DAO family. ThiO subfamily. Monomer. It depends on FAD as a cofactor.

It carries out the reaction glycine + O2 + H2O = glyoxylate + H2O2 + NH4(+). The catalysed reaction is sarcosine + O2 + H2O = methylamine + glyoxylate + H2O2. It functions in the pathway cofactor biosynthesis; thiamine diphosphate biosynthesis. Functionally, catalyzes the oxidation of glycine, leading to glyoxyl imine and hydrogen peroxide as primary products; glyoxyl imine is used for the biosynthesis of the thiazole ring of thiamine. Otherwise, glyoxyl imine is spontaneously hydrolyzed in water to produce glyoxylate and ammonia. Can also use sarcosine (N-methylglycine) as substrate, and, to a lesser extent, N-ethylglycine and D-proline. Has no activity towards other amino-acids D-Asp, D-Glu, D-Gln, D-His, D-Leu, D-Lys, D-ornithine, D-Trp, D-Val, L-Ala, L-Asp, L-Glu, L-His, L-Leu, L-Lys, L-Met and L-Pro. The polypeptide is Glycine oxidase (Pseudomonas putida (strain ATCC 47054 / DSM 6125 / CFBP 8728 / NCIMB 11950 / KT2440)).